The sequence spans 129 residues: Glycine cleavage system H protein (129 aa).

The 83-residue stretch at 24 to 106 (EAVVGITEHA…YGAGWLFRIK (83 aa)) folds into the Lipoyl-binding domain. Position 65 is an N6-lipoyllysine (Lys65).

Belongs to the GcvH family. In terms of assembly, the glycine cleavage system is composed of four proteins: P, T, L and H. The cofactor is (R)-lipoate.

The glycine cleavage system catalyzes the degradation of glycine. The H protein shuttles the methylamine group of glycine from the P protein to the T protein. The polypeptide is Glycine cleavage system H protein (Aeromonas salmonicida (strain A449)).